The following is a 308-amino-acid chain: NADH-cytochrome b5 reductase 1 (308 aa).

A helical membrane pass occupies residues 29–49; sequence VASSPAFLVAAAAIVIAAAFY. Residues 64–167 enclose the FAD-binding FR-type domain; it reads SIWKEFPLQK…KGPKGNFKYT (104 aa). FAD is bound by residues 147–162 and 173–205; these read ASLK…GPKG and HLGM…NITL.

It belongs to the flavoprotein pyridine nucleotide cytochrome reductase family. Monomer. Component of the 2-(3-amino-3-carboxypropyl)histidine synthase complex composed of DPH1, DPH2, DPH3 and a NADH-dependent reductase, predominantly MCR1.1. Requires FAD as cofactor.

The protein resides in the mitochondrion outer membrane. The catalysed reaction is 2 Fe(III)-[cytochrome b5] + NADH = 2 Fe(II)-[cytochrome b5] + NAD(+) + H(+). The enzyme catalyses 2 Fe(3+)-[Dph3] + NADH = 2 Fe(2+)-[Dph3] + NAD(+) + H(+). The protein operates within protein modification; peptidyl-diphthamide biosynthesis. NADH-dependent reductase for DPH3 and cytochrome b5. Required for the first step of diphthamide biosynthesis, a post-translational modification of histidine which occurs in elongation factor 2. DPH1 and DPH2 transfer a 3-amino-3-carboxypropyl (ACP) group from S-adenosyl-L-methionine (SAM) to a histidine residue, the reaction is assisted by a reduction system comprising DPH3 and a NADH-dependent reductase, predominantly MCR1.1. By reducing DPH3, also involved in the formation of the tRNA wobble base modification mcm5s 2U (5-methoxycarbonylmethyl-2-thiouridine), mediated by the elongator complex. The cytochrome b5/NADH cytochrome b5 reductase electron transfer system supports the catalytic activity of several sterol biosynthetic enzymes. This is NADH-cytochrome b5 reductase 1 (MCR1.1) from Laccaria bicolor (strain S238N-H82 / ATCC MYA-4686) (Bicoloured deceiver).